We begin with the raw amino-acid sequence, 29 residues long: Dermaseptin-H7 (29 aa).

Position 29 is a leucine amide (Leu-29).

It belongs to the frog skin active peptide (FSAP) family. Dermaseptin subfamily. As to expression, expressed by the skin glands.

The protein resides in the secreted. Has antibacterial activity against the Gram-negative bacterium E.coli and the Gram-positive bacterium S.aureus. Has antiprotozoal activity against L.amazonensis. Has antifungal activity. Has no hemolytic activity. This chain is Dermaseptin-H7, found in Pithecopus hypochondrialis (Orange-legged leaf frog).